Reading from the N-terminus, the 301-residue chain is Pyridoxal 5'-phosphate synthase subunit PdxS (301 aa).

Residue D31 coordinates D-ribose 5-phosphate. K88 acts as the Schiff-base intermediate with D-ribose 5-phosphate in catalysis. G160 is a D-ribose 5-phosphate binding site. K172 contacts D-glyceraldehyde 3-phosphate. Residues G221 and 242–243 (GS) each bind D-ribose 5-phosphate.

This sequence belongs to the PdxS/SNZ family. In terms of assembly, in the presence of PdxT, forms a dodecamer of heterodimers.

The catalysed reaction is aldehydo-D-ribose 5-phosphate + D-glyceraldehyde 3-phosphate + L-glutamine = pyridoxal 5'-phosphate + L-glutamate + phosphate + 3 H2O + H(+). It participates in cofactor biosynthesis; pyridoxal 5'-phosphate biosynthesis. Functionally, catalyzes the formation of pyridoxal 5'-phosphate from ribose 5-phosphate (RBP), glyceraldehyde 3-phosphate (G3P) and ammonia. The ammonia is provided by the PdxT subunit. Can also use ribulose 5-phosphate and dihydroxyacetone phosphate as substrates, resulting from enzyme-catalyzed isomerization of RBP and G3P, respectively. The polypeptide is Pyridoxal 5'-phosphate synthase subunit PdxS (Methanosarcina acetivorans (strain ATCC 35395 / DSM 2834 / JCM 12185 / C2A)).